Here is a 395-residue protein sequence, read N- to C-terminus: Phosphoglycerate kinase (395 aa).

Substrate is bound by residues 21-23 (DLN), Arg-36, 59-62 (HLGR), Arg-113, and Arg-146. Residues Lys-197, Glu-324, and 350-353 (GGDT) contribute to the ATP site.

The protein belongs to the phosphoglycerate kinase family. As to quaternary structure, monomer.

It localises to the cytoplasm. The catalysed reaction is (2R)-3-phosphoglycerate + ATP = (2R)-3-phospho-glyceroyl phosphate + ADP. The protein operates within carbohydrate degradation; glycolysis; pyruvate from D-glyceraldehyde 3-phosphate: step 2/5. The polypeptide is Phosphoglycerate kinase (Acinetobacter baumannii (strain AB307-0294)).